We begin with the raw amino-acid sequence, 182 residues long: MARLLWLLRGLTLGTAPRRAVRGQAGGGGPGTGPGLGEAGSLATCELPLAKSEWQKKLTPEQFYVTREKGTEPPFSGIYLNNKEAGMYHCVCCDSPLFSSEKKYCSGTGWPSFSEAHGTSGSDESHTGILRRLDTSLGSARTEVVCKQCEAHLGHVFPDGPGPNGQRFCINSVALKFKPRKH.

The N-terminal 20 residues, 1–20, are a transit peptide targeting the mitochondrion; it reads MARLLWLLRGLTLGTAPRRA. Positions 51–180 constitute a MsrB domain; the sequence is KSEWQKKLTP…NSVALKFKPR (130 aa). Residues Cys-90, Cys-93, Cys-146, and Cys-149 each coordinate Zn(2+). Cys-169 (nucleophile) is an active-site residue.

Belongs to the MsrB Met sulfoxide reductase family. In terms of assembly, interacts with DAOA; the interaction is direct. Requires Zn(2+) as cofactor. In terms of tissue distribution, ubiquitous. Detected in retina, ocular ciliary body, skeletal muscle, heart, colon, bone marrow, cerebellum, small intestine, fetal brain, fetal liver, kidney, spinal cord, lung, placenta and prostate.

It localises to the mitochondrion. It catalyses the reaction L-methionyl-[protein] + [thioredoxin]-disulfide + H2O = L-methionyl-(R)-S-oxide-[protein] + [thioredoxin]-dithiol. The catalysed reaction is [thioredoxin]-disulfide + L-methionine + H2O = L-methionine (R)-S-oxide + [thioredoxin]-dithiol. Its function is as follows. Methionine-sulfoxide reductase that specifically reduces methionine (R)-sulfoxide back to methionine. While in many cases, methionine oxidation is the result of random oxidation following oxidative stress, methionine oxidation is also a post-translational modification that takes place on specific residue. Upon oxidative stress, may play a role in the preservation of mitochondrial integrity by decreasing the intracellular reactive oxygen species build-up through its scavenging role, hence contributing to cell survival and protein maintenance. This chain is Methionine-R-sulfoxide reductase B2, mitochondrial (MSRB2), found in Homo sapiens (Human).